A 212-amino-acid polypeptide reads, in one-letter code: ATP-dependent Clp protease proteolytic subunit (212 aa).

The active-site Nucleophile is the S114. The active site involves H139.

Belongs to the peptidase S14 family. As to quaternary structure, fourteen ClpP subunits assemble into 2 heptameric rings which stack back to back to give a disk-like structure with a central cavity, resembling the structure of eukaryotic proteasomes.

It localises to the cytoplasm. The enzyme catalyses Hydrolysis of proteins to small peptides in the presence of ATP and magnesium. alpha-casein is the usual test substrate. In the absence of ATP, only oligopeptides shorter than five residues are hydrolyzed (such as succinyl-Leu-Tyr-|-NHMec, and Leu-Tyr-Leu-|-Tyr-Trp, in which cleavage of the -Tyr-|-Leu- and -Tyr-|-Trp bonds also occurs).. Cleaves peptides in various proteins in a process that requires ATP hydrolysis. Has a chymotrypsin-like activity. Plays a major role in the degradation of misfolded proteins. In Aromatoleum aromaticum (strain DSM 19018 / LMG 30748 / EbN1) (Azoarcus sp. (strain EbN1)), this protein is ATP-dependent Clp protease proteolytic subunit.